A 210-amino-acid chain; its full sequence is Chaperone protein TorD (210 aa).

It belongs to the TorD/DmsD family. TorD subfamily.

Its subcellular location is the cytoplasm. Involved in the biogenesis of TorA. Acts on TorA before the insertion of the molybdenum cofactor and, as a result, probably favors a conformation of the apoenzyme that is competent for acquiring the cofactor. This Salmonella dublin (strain CT_02021853) protein is Chaperone protein TorD.